A 363-amino-acid polypeptide reads, in one-letter code: UDP-N-acetylglucosamine--N-acetylmuramyl-(pentapeptide) pyrophosphoryl-undecaprenol N-acetylglucosamine transferase (363 aa).

UDP-N-acetyl-alpha-D-glucosamine-binding positions include 14-16, Asn122, Arg163, Ser190, and Gln285; that span reads TGG.

The protein belongs to the glycosyltransferase 28 family. MurG subfamily.

The protein resides in the cell inner membrane. It carries out the reaction di-trans,octa-cis-undecaprenyl diphospho-N-acetyl-alpha-D-muramoyl-L-alanyl-D-glutamyl-meso-2,6-diaminopimeloyl-D-alanyl-D-alanine + UDP-N-acetyl-alpha-D-glucosamine = di-trans,octa-cis-undecaprenyl diphospho-[N-acetyl-alpha-D-glucosaminyl-(1-&gt;4)]-N-acetyl-alpha-D-muramoyl-L-alanyl-D-glutamyl-meso-2,6-diaminopimeloyl-D-alanyl-D-alanine + UDP + H(+). The protein operates within cell wall biogenesis; peptidoglycan biosynthesis. Functionally, cell wall formation. Catalyzes the transfer of a GlcNAc subunit on undecaprenyl-pyrophosphoryl-MurNAc-pentapeptide (lipid intermediate I) to form undecaprenyl-pyrophosphoryl-MurNAc-(pentapeptide)GlcNAc (lipid intermediate II). The protein is UDP-N-acetylglucosamine--N-acetylmuramyl-(pentapeptide) pyrophosphoryl-undecaprenol N-acetylglucosamine transferase of Prochlorococcus marinus (strain MIT 9301).